Here is a 29-residue protein sequence, read N- to C-terminus: MLQVFDIIGPIMIGPSESITAGAVRIXKI.

This sequence belongs to the iron-sulfur dependent L-serine dehydratase family. Heterodimer of an alpha chain and a beta chain. Requires [4Fe-4S] cluster as cofactor.

It carries out the reaction L-serine = pyruvate + NH4(+). It functions in the pathway carbohydrate biosynthesis; gluconeogenesis. The chain is L-serine dehydratase, beta chain from Anaerotignum propionicum (Clostridium propionicum).